The sequence spans 674 residues: Probable DNA helicase MCM9 (674 aa).

A C4-type zinc finger spans residues 165-198; sequence CRKCKCRFTVHPELEAGNRITLPASCKSKSAKGC. Residues 318-521 form the MCM domain; that stretch reads GRNSILKGIC…KWDKIVSSHI (204 aa). Residue 368 to 375 coordinates ATP; sequence GDPGTGKS. Residues 497–500 carry the Arginine finger motif; it reads SRFD.

It belongs to the MCM family.

The protein localises to the nucleus. The enzyme catalyses ATP + H2O = ADP + phosphate + H(+). In terms of biological role, probable DNA helicase that may play a role in DNA repair during meiosis. In Oryza sativa subsp. indica (Rice), this protein is Probable DNA helicase MCM9 (MCM9).